The sequence spans 302 residues: uncharacterized protein (302 aa).

In terms of biological role, may be a membrane-bound protein, possibly involved in IAA or IAA-Lysine transport. This is an uncharacterized protein from Pseudomonas savastanoi (Pseudomonas syringae pv. savastanoi).